The sequence spans 278 residues: Diaminopimelate epimerase (278 aa).

Positions 13, 46, and 65 each coordinate substrate. Residue cysteine 74 is the Proton donor of the active site. Substrate is bound by residues 75–76 (GN), asparagine 157, asparagine 190, and 208–209 (ER). The active-site Proton acceptor is cysteine 217. 218-219 (GT) lines the substrate pocket.

The protein belongs to the diaminopimelate epimerase family. Homodimer.

The protein localises to the cytoplasm. The enzyme catalyses (2S,6S)-2,6-diaminopimelate = meso-2,6-diaminopimelate. It functions in the pathway amino-acid biosynthesis; L-lysine biosynthesis via DAP pathway; DL-2,6-diaminopimelate from LL-2,6-diaminopimelate: step 1/1. Its function is as follows. Catalyzes the stereoinversion of LL-2,6-diaminopimelate (L,L-DAP) to meso-diaminopimelate (meso-DAP), a precursor of L-lysine and an essential component of the bacterial peptidoglycan. The polypeptide is Diaminopimelate epimerase (Magnetococcus marinus (strain ATCC BAA-1437 / JCM 17883 / MC-1)).